The chain runs to 468 residues: MTHRTRFAPSPTGHLHIGGARTALFSWLYARKHGGTFILRIEDTDLERSTVESVNAILEGMTWLGLEYDEGPFYQTHRFDRYREVMEQLLEEGHAYRCYCTKEELDELRAGQMERKEKPRYDGRCRHRSEPRPGVLPVIRFRNPTEGEVAWDDLVRGRIAFQNSELDDLIIARSDGTPTYNFTVVVDDLDMKISHVIRGDDHVNNTPRQINILKALGVEPPRYGHVPMILGADGARLSKRHGAVSVMQYRDEGYLPEALLNYLVRLGWSHGDQEIFSVDEMIEYFDANAINHSAATFNPDKLLWLNHHYLMHSDPAHVAHHLRWHLGRLDIDPTEGPDPVDVVVAQRERCKTLVEMAQASRFFYRDFDDYDPKSAQKYLTAASVPALESLRRHLAVVRSWEKEFLHAVLVATGEEMGLKLGAVAQPLRVAVAGTAVSPPMDVTLHLLGQLRTLNRIDRALQYIEAKKD.

The 'HIGH' region signature appears at 9–19 (PSPTGHLHIGG). Positions 98, 100, 125, and 127 each coordinate Zn(2+). A 'KMSKS' region motif is present at residues 236-240 (RLSKR). Lysine 239 contacts ATP.

Belongs to the class-I aminoacyl-tRNA synthetase family. Glutamate--tRNA ligase type 1 subfamily. Monomer. Requires Zn(2+) as cofactor.

The protein resides in the cytoplasm. The catalysed reaction is tRNA(Glu) + L-glutamate + ATP = L-glutamyl-tRNA(Glu) + AMP + diphosphate. Functionally, catalyzes the attachment of glutamate to tRNA(Glu) in a two-step reaction: glutamate is first activated by ATP to form Glu-AMP and then transferred to the acceptor end of tRNA(Glu). The protein is Glutamate--tRNA ligase 2 of Methylococcus capsulatus (strain ATCC 33009 / NCIMB 11132 / Bath).